The following is a 245-amino-acid chain: Flavin-dependent thymidylate synthase (245 aa).

The ThyX domain maps to 5–210; sequence IKVRLVNYTK…ELRPIIRWAK (206 aa). Residues Ser-59, 83–85, and Gln-91 contribute to the FAD site; that span reads RHR. DUMP is bound by residues 80–83, 91–95, and Arg-149; these read QLVR and QQSMR. The short motif at 83-93 is the ThyX motif element; sequence RHRIASYTQQS. Residues 165 to 167 and His-171 contribute to the FAD site; that span reads NLR. Residue Arg-176 participates in dUMP binding. The active-site Involved in ionization of N3 of dUMP, leading to its activation is Arg-176.

It belongs to the thymidylate synthase ThyX family. As to quaternary structure, homotetramer. FAD serves as cofactor.

It carries out the reaction dUMP + (6R)-5,10-methylene-5,6,7,8-tetrahydrofolate + NADPH + H(+) = dTMP + (6S)-5,6,7,8-tetrahydrofolate + NADP(+). Its pathway is pyrimidine metabolism; dTTP biosynthesis. Its function is as follows. Catalyzes the reductive methylation of 2'-deoxyuridine-5'-monophosphate (dUMP) to 2'-deoxythymidine-5'-monophosphate (dTMP) while utilizing 5,10-methylenetetrahydrofolate (mTHF) as the methyl donor, and NADPH and FADH(2) as the reductant. This is Flavin-dependent thymidylate synthase from Thermococcus onnurineus (strain NA1).